Here is a 274-residue protein sequence, read N- to C-terminus: Large ribosomal subunit protein uL2 (274 aa).

Disordered regions lie at residues 28-55 (APHA…RHVG) and 224-274 (VAMN…RRRK).

The protein belongs to the universal ribosomal protein uL2 family. Part of the 50S ribosomal subunit. Forms a bridge to the 30S subunit in the 70S ribosome.

Its function is as follows. One of the primary rRNA binding proteins. Required for association of the 30S and 50S subunits to form the 70S ribosome, for tRNA binding and peptide bond formation. It has been suggested to have peptidyltransferase activity; this is somewhat controversial. Makes several contacts with the 16S rRNA in the 70S ribosome. The polypeptide is Large ribosomal subunit protein uL2 (Pseudomonas putida (strain ATCC 47054 / DSM 6125 / CFBP 8728 / NCIMB 11950 / KT2440)).